The following is a 276-amino-acid chain: Elongation factor Ts, mitochondrial (276 aa).

It belongs to the EF-Ts family.

Its subcellular location is the mitochondrion. In terms of biological role, associates with the EF-Tu.GDP complex and induces the exchange of GDP to GTP. It remains bound to the aminoacyl-tRNA.EF-Tu.GTP complex up to the GTP hydrolysis stage on the ribosome. The protein is Elongation factor Ts, mitochondrial of Leishmania major.